The following is a 155-amino-acid chain: MTNVTEKVEQLAKPIVEREGMELVDVEFVKEGADWFLRVSIDKDGGVDLEDCVNINEKLSEALNQDDPIDEPYYLDVASPGAERPLKKTEDFEKAIGKHVYIKTHDPVKDATEFEGTLLTYSEEMLELEVRVKTRKLKIEIPVNKIAMARLAVVF.

This sequence belongs to the RimP family.

The protein localises to the cytoplasm. Functionally, required for maturation of 30S ribosomal subunits. The sequence is that of Ribosome maturation factor RimP from Exiguobacterium sibiricum (strain DSM 17290 / CCUG 55495 / CIP 109462 / JCM 13490 / 255-15).